An 895-amino-acid polypeptide reads, in one-letter code: Stonin-2 (895 aa).

3 disordered regions span residues 10–101 (THQS…AISN), 144–204 (ASES…METI), and 236–279 (NEVG…PKST). Residues 64–73 (SHSEQDDSSE) are compositionally biased toward basic and acidic residues. Polar residues-rich tracts occupy residues 145 to 169 (SESS…TDLQ) and 179 to 193 (GRAS…SSSL). Phosphoserine is present on residues S278, S284, and S299. Disordered regions lie at residues 291–326 (ISSL…SPIN) and 386–424 (QIDD…PRDG). 2 consecutive short sequence motifs (NPF) follow at residues 310-312 (NPF) and 326-328 (NPF). A compositionally biased stretch (polar residues) spans 311–323 (PFLNESLQDIQPS). The 134-residue stretch at 424-557 (GWPMMLRIPE…DLPVQSMDLS (134 aa)) folds into the SHD domain. Residues 565 to 872 (EEEITVDIRD…AHYSYKVEIE (308 aa)) form the MHD domain. S759 bears the Phosphoserine mark.

It belongs to the Stoned B family. Interacts with the second C2 domain of synaptotagmins SYT1 and SYT2. Interacts with EPS15, EPS15R and ITSN1. Interacts indirectly with the AP-2 adapter complex. Interacts with TOR1A and COPS4; the interaction controls STON2 protein stability. In terms of processing, phosphorylated in vitro by PKD. Post-translationally, neddylated and ubiquitinated; leading to its degradation and inhibited by TOR1A and COPS4.

It is found in the synapse. The protein resides in the synaptosome. The protein localises to the cytoplasm. It localises to the membrane. Functionally, adapter protein involved in endocytic machinery. Involved in the synaptic vesicle recycling. May facilitate clathrin-coated vesicle uncoating. The protein is Stonin-2 (Ston2) of Rattus norvegicus (Rat).